Reading from the N-terminus, the 202-residue chain is NADH dehydrogenase [ubiquinone] iron-sulfur protein 7, mitochondrial (202 aa).

The transit peptide at 1 to 56 (MLRRTSFNFTGRAMISRGSPEWSHRLDLKKGKKTTMMHKLGTSKPNNALQYAQMTL) directs the protein to the mitochondrion. [4Fe-4S] cluster contacts are provided by Cys-77, Cys-78, Cys-142, and Cys-172.

The protein belongs to the complex I 20 kDa subunit family. As to quaternary structure, complex I is composed of 45 different subunits This is a component of the iron-sulfur (IP) fragment of the enzyme. Requires [4Fe-4S] cluster as cofactor.

It localises to the mitochondrion. It carries out the reaction a ubiquinone + NADH + 5 H(+)(in) = a ubiquinol + NAD(+) + 4 H(+)(out). Its function is as follows. Core subunit of the mitochondrial membrane respiratory chain NADH dehydrogenase (Complex I) that is believed to belong to the minimal assembly required for catalysis. Complex I functions in the transfer of electrons from NADH to the respiratory chain. The immediate electron acceptor for the enzyme is believed to be ubiquinone. In Trypanosoma brucei brucei, this protein is NADH dehydrogenase [ubiquinone] iron-sulfur protein 7, mitochondrial (NDHK).